The sequence spans 523 residues: Arylsulfatase K (523 aa).

The N-terminal stretch at 1–16 (MLRVFVLLIFNVNAYC) is a signal peptide. Positions 35 and 75 each coordinate Ca(2+). Cys-75 functions as the Nucleophile in the catalytic mechanism. 3-oxoalanine (Cys) is present on Cys-75. An N-linked (GlcNAc...) asparagine glycan is attached at Asn-103. Substrate-binding residues include Lys-123 and His-246. Asn-257 carries an N-linked (GlcNAc...) asparagine glycan. Residues Asp-308 and His-309 each contribute to the Ca(2+) site. The N-linked (GlcNAc...) asparagine glycan is linked to Asn-405.

This sequence belongs to the sulfatase family. Ca(2+) is required as a cofactor. In terms of processing, the conversion to 3-oxoalanine (also known as C-formylglycine, FGly), of a serine or cysteine residue in prokaryotes and of a cysteine residue in eukaryotes, is critical for catalytic activity.

The protein resides in the secreted. It is found in the lysosome. The catalysed reaction is an aryl sulfate + H2O = a phenol + sulfate + H(+). The enzyme catalyses Hydrolysis of the 2-sulfate groups of the 2-O-sulfo-D-glucuronate residues of chondroitin sulfate, heparin and heparitin sulfate.. Catalyzes the hydrolysis of pseudosubstrates such as p-nitrocatechol sulfate and p-nitrophenyl sulfate. Catalyzes the hydrolysis of the 2-sulfate groups of the 2-O-sulfo-D-glucuronate residues of chondroitin sulfate, heparin and heparitin sulfate. Acts selectively on 2-sulfoglucuronate and lacks activity against 2-sulfoiduronate. This chain is Arylsulfatase K (arsk), found in Danio rerio (Zebrafish).